Here is a 1312-residue protein sequence, read N- to C-terminus: DNA repair protein RAD50 (1312 aa).

Residues Arg13, Asn38, Gly39, Gly41, Lys42, Thr43, Thr44, Val67, Asp69, and Gln159 each contribute to the ATP site. A Mg(2+)-binding site is contributed by Thr43. Residue Gln159 participates in Mg(2+) binding. 3 coiled-coil regions span residues 228–359, 401–598, and 635–673; these read TSKE…QADR, RERQ…AKLN, and SQDF…ITQL. Residue Ser635 is modified to Phosphoserine; by ATM. Residues 635 to 734 form the Zinc-hook domain; the sequence is SQDFESDLDR…RRDEMLGLVP (100 aa). Zn(2+) is bound by residues Cys681 and Cys684. Thr690 carries the phosphothreonine modification. 2 coiled-coil regions span residues 706–734 and 789–1079; these read RLAP…GLVP and LTDV…GRQK. Lys959 carries the N6-acetyllysine modification.

The protein belongs to the SMC family. RAD50 subfamily. As to quaternary structure, component of the MRN complex composed of two heterodimers RAD50 and MRE11 associated with a single NBN. The MRN complexes dimerize on DNA to form joined MRN-MRN oligomers required for DNA double-strand break repair. As part of the MRN complex, interacts with MCM8 and MCM9; the interaction recruits the complex to DNA repair sites. Component of the BASC complex, at least composed of BRCA1, MSH2, MSH6, MLH1, ATM, BLM, RAD50, MRE11 and NBN. Found in a complex with TERF2. Interacts with RINT1. Interacts with BRCA1 via its N-terminal domain. Interacts with DCLRE1C/Artemis. Interacts with MRNIP. Interacts with CYREN (via XLF motif). Interacts with C1QBP and MRE11; interaction takes place in absence of DNA damage to form the MRC (MRE11-RAD50-C1QBP) complex that inhibits the activity of MRE11. In terms of assembly, (Microbial infection) Interacts with herpes simplex virus 1 protein UL12. Zn(2+) is required as a cofactor. Phosphorylation at Ser-635 by ATM in response to DNA damage is required for double-strand break (DSB) repair. In terms of tissue distribution, expressed at very low level in most tissues, except in testis where it is expressed at higher level. Expressed in fibroblasts.

Its subcellular location is the nucleus. The protein resides in the chromosome. It is found in the telomere. It carries out the reaction ATP + H2O = ADP + phosphate + H(+). Its function is as follows. Component of the MRN complex, which plays a central role in double-strand break (DSB) repair, DNA recombination, maintenance of telomere integrity and meiosis. The MRN complex is involved in the repair of DNA double-strand breaks (DSBs) via homologous recombination (HR), an error-free mechanism which primarily occurs during S and G2 phases. The complex (1) mediates the end resection of damaged DNA, which generates proper single-stranded DNA, a key initial steps in HR, and is (2) required for the recruitment of other repair factors and efficient activation of ATM and ATR upon DNA damage. The MRN complex possesses single-strand endonuclease activity and double-strand-specific 3'-5' exonuclease activity, which are provided by MRE11, to initiate end resection, which is required for single-strand invasion and recombination. Within the complex, RAD50 is both required to bind DNA ends and hold them in close proximity and regulate the activity of MRE11. RAD50 provides an ATP-dependent control of MRE11 by positioning DNA ends into the MRE11 active site: ATP-binding induces a large structural change from an open form with accessible MRE11 nuclease sites into a closed form. The MRN complex is also required for DNA damage signaling via activation of the ATM and ATR kinases: the nuclease activity of MRE11 is not required to activate ATM and ATR. The MRN complex is also required for the processing of R-loops. In telomeres the MRN complex may modulate t-loop formation. The polypeptide is DNA repair protein RAD50 (Homo sapiens (Human)).